Here is a 466-residue protein sequence, read N- to C-terminus: Uronate isomerase (466 aa).

The protein belongs to the metallo-dependent hydrolases superfamily. Uronate isomerase family.

The enzyme catalyses D-glucuronate = D-fructuronate. It catalyses the reaction aldehydo-D-galacturonate = keto-D-tagaturonate. Its pathway is carbohydrate metabolism; pentose and glucuronate interconversion. The protein is Uronate isomerase of Streptococcus agalactiae serotype III (strain NEM316).